A 211-amino-acid polypeptide reads, in one-letter code: Thymidylate kinase (211 aa).

11 to 18 (GPDGAGKT) provides a ligand contact to ATP.

The protein belongs to the thymidylate kinase family.

The enzyme catalyses dTMP + ATP = dTDP + ADP. Phosphorylation of dTMP to form dTDP in both de novo and salvage pathways of dTTP synthesis. The sequence is that of Thymidylate kinase from Streptococcus pyogenes serotype M6 (strain ATCC BAA-946 / MGAS10394).